Consider the following 537-residue polypeptide: Beta-1-syntrophin (537 aa).

A2 is subject to N-acetylalanine. 2 PH domains span residues 18-297 and 321-432; these read RAQR…SNAG and EIRH…QGCH. Residues S86, S125, and S204 each carry the phosphoserine modification. The region spanning 111–194 is the PDZ domain; sequence GVKVLKQELG…EVLLEVKYMR (84 aa). A disordered region spans residues 204–233; sequence SPVSEIGWETPPPESPRLGGGSAEPLSSQS. Position 213 is a phosphothreonine (T213). S218, S225, S231, S235, and S388 each carry phosphoserine. Residues 481–537 form the SU domain; it reads PYEKLKMSSDDGIRMLYLDFGGKEGEIQLDLHSCPKPIVFIIHSFLSAKITRLGLVA. The calmodulin-binding stretch occupies residues 517–537; the sequence is PIVFIIHSFLSAKITRLGLVA.

This sequence belongs to the syntrophin family. As to quaternary structure, monomer and homodimer. Interacts with the viral HTLV-1 TAX protein and other members of the syntrophin family: SNTA1 and SNTB2. Interacts with the dystrophin protein DMD and related proteins DTNA and UTRN and with the sodium channel proteins SCN4A and SCN5A. Interacts with DTNB. In terms of processing, phosphorylated by CaM-kinase II. In terms of tissue distribution, ubiquitous. Expressed at high levels in the liver.

Its subcellular location is the cell membrane. It is found in the sarcolemma. The protein localises to the cell junction. It localises to the cytoplasm. The protein resides in the cytoskeleton. Adapter protein that binds to and probably organizes the subcellular localization of a variety of membrane proteins. May link various receptors to the actin cytoskeleton and the dystrophin glycoprotein complex. In Mus musculus (Mouse), this protein is Beta-1-syntrophin (Sntb1).